The chain runs to 451 residues: Protein-tyrosine kinase 6 (451 aa).

The 65-residue stretch at 8–72 (HLGPKYVGLW…PHNYLAERET (65 aa)) folds into the SH3 domain. 4 positions are modified to phosphotyrosine; by autocatalysis: Tyr13, Tyr61, Tyr66, and Tyr114. An SH2 domain is found at 78–170 (WFFGCISRSE…SHGLRLAAPC (93 aa)). A linker region spans residues 171–190 (RKHEPEPLPHWDDWERPREE). Residues 191–445 (FTLCRKLGSG…ALRERLSSFT (255 aa)) form the Protein kinase domain. Residues 197–205 (LGSGYFGEV) and Lys219 each bind ATP. Asp312 acts as the Proton acceptor in catalysis. A phosphotyrosine; by autocatalysis mark is found at Tyr342 and Tyr351. A Phosphotyrosine modification is found at Tyr447.

Belongs to the protein kinase superfamily. Tyr protein kinase family. BRK/PTK6/SIK subfamily. As to quaternary structure, interacts with GAP-A.p65. Interacts (via SH3 and SH2 domains) with KHDRBS1. Interacts (via SH3 and SH2 domains) with phosphorylated IRS4. Interacts with ADAM15. Interacts (via SH3 domain) with SFPQ. Interacts with EGFR and ERBB2. Interacts with STAP2. Interacts with PNX. Interacts with SFPQ. Interacts with PTK/ATK. Interacts with CTNNB1. In terms of processing, autophosphorylated. Autophosphorylation of Tyr-342 leads to an increase of kinase activity. Tyr-447 binds to the SH2 domain when phosphorylated and negatively regulates kinase activity. Epithelia-specific. Very high level in colon and high levels in small intestine and prostate, and low levels in some fetal tissues. Not expressed in breast or ovarian tissue but expressed in high percentage of breast and ovarian cancers. Also overexpressed in some metastatic melanomas, lymphomas, colon cancers, squamous cell carcinomas and prostate cancers. Also found in melanocytes. Not expressed in heart, brain, placenta, lung, liver, skeletal muscle, kidney and pancreas. Isoform 2 is present in prostate epithelial cell lines derived from normal prostate and prostate adenocarcinomas, as well as in a variety of cell lines.

The protein resides in the cytoplasm. It localises to the nucleus. Its subcellular location is the cell projection. The protein localises to the ruffle. It is found in the membrane. The enzyme catalyses L-tyrosyl-[protein] + ATP = O-phospho-L-tyrosyl-[protein] + ADP + H(+). Its activity is regulated as follows. Activated by EGF, NRG1 and IGF1. Inhibited by SOCS3 to phosphorylate STAT3. Stabilized in the inactive form by an association between the SH3 domain and the SH2-TK linker region. Interaction between Trp-184 within SH2-TK linker region and the catalytic domain appears essential for positive regulation of kinase activity. Functionally, non-receptor tyrosine-protein kinase implicated in the regulation of a variety of signaling pathways that control the differentiation and maintenance of normal epithelia, as well as tumor growth. Function seems to be context dependent and differ depending on cell type, as well as its intracellular localization. A number of potential nuclear and cytoplasmic substrates have been identified. These include the RNA-binding proteins: KHDRBS1/SAM68, KHDRBS2/SLM1, KHDRBS3/SLM2 and SFPQ/PSF; transcription factors: STAT3 and STAT5A/B and a variety of signaling molecules: ARHGAP35/p190RhoGAP, PXN/paxillin, BTK/ATK, STAP2/BKS. Phosphorylates the GTPase-activating protein ARAP1 following EGF stimulation which enhances EGFR signaling by delaying EGFR down-regulation. Also associates with a variety of proteins that are likely upstream of PTK6 in various signaling pathways, or for which PTK6 may play an adapter-like role. These proteins include ADAM15, EGFR, ERBB2, ERBB3 and IRS4. In normal or non-tumorigenic tissues, PTK6 promotes cellular differentiation and apoptosis. In tumors PTK6 contributes to cancer progression by sensitizing cells to mitogenic signals and enhancing proliferation, anchorage-independent survival and migration/invasion. Association with EGFR, ERBB2, ERBB3 may contribute to mammary tumor development and growth through enhancement of EGF-induced signaling via BTK/AKT and PI3 kinase. Contributes to migration and proliferation by contributing to EGF-mediated phosphorylation of ARHGAP35/p190RhoGAP, which promotes association with RASA1/p120RasGAP, inactivating RhoA while activating RAS. EGF stimulation resulted in phosphorylation of PNX/Paxillin by PTK6 and activation of RAC1 via CRK/CrKII, thereby promoting migration and invasion. PTK6 activates STAT3 and STAT5B to promote proliferation. Nuclear PTK6 may be important for regulating growth in normal epithelia, while cytoplasmic PTK6 might activate oncogenic signaling pathways. Inhibits PTK6 phosphorylation and PTK6 association with other tyrosine-phosphorylated proteins. This Homo sapiens (Human) protein is Protein-tyrosine kinase 6 (PTK6).